The primary structure comprises 130 residues: UPF0102 protein RPA0323 (130 aa).

The protein belongs to the UPF0102 family.

In Rhodopseudomonas palustris (strain ATCC BAA-98 / CGA009), this protein is UPF0102 protein RPA0323.